We begin with the raw amino-acid sequence, 257 residues long: tRNA pseudouridine synthase A (257 aa).

Asp53 acts as the Nucleophile in catalysis. A substrate-binding site is contributed by Tyr111.

The protein belongs to the tRNA pseudouridine synthase TruA family. As to quaternary structure, homodimer.

It carries out the reaction uridine(38/39/40) in tRNA = pseudouridine(38/39/40) in tRNA. Functionally, formation of pseudouridine at positions 38, 39 and 40 in the anticodon stem and loop of transfer RNAs. This is tRNA pseudouridine synthase A from Xanthomonas oryzae pv. oryzae (strain MAFF 311018).